A 125-amino-acid polypeptide reads, in one-letter code: Conopressin-conophysin, isoform 1 (125 aa).

The N-terminal stretch at 1-22 (MQMGRPTLLPCLLLLLVLSTQA) is a signal peptide. Cys-23 and Cys-28 are joined by a disulfide. Residue Gly-31 is modified to Glycine amide. The propeptide occupies 32 to 39 (GKRDVHMI). 7 disulfide bridges follow: Cys-45–Cys-85, Cys-48–Cys-59, Cys-53–Cys-75, Cys-60–Cys-65, Cys-92–Cys-112, Cys-104–Cys-124, and Cys-113–Cys-118.

This sequence belongs to the vasopressin/oxytocin family. Expressed by the venom gland.

Its subcellular location is the secreted. In terms of biological role, targets vasopressin-oxytocin related receptors. This chain is Conopressin-conophysin, isoform 1, found in Conus monile (Necklace cone).